The primary structure comprises 41 residues: U-theraphotoxin-Lk1a (41 aa).

Disulfide bonds link Cys1-Cys16, Cys8-Cys21, and Cys15-Cys36.

It belongs to the neurotoxin 14 (magi-1) family. 08 (Ltx-4) subfamily. Expressed by the venom gland.

The protein resides in the secreted. Its function is as follows. Toxin that causes irreversible contractile paralysis in adult Aedes aegypti resulting in 100% mortality after 24 hours. The protein is U-theraphotoxin-Lk1a of Lasiodora klugi (Bahia scarlet tarantula).